The following is a 513-amino-acid chain: MTSADAPRPQLKIRLIHLDTGRENVAVMSRRSKALRPEVFSGFSRVEIRRNAKSVLATLLITDDDALVGPDELGLAEPAFRRFGEPAGTFVTVSPATPPDSLDAVRGKIQGRTLSAAEITAIVNDLTRYRYSDMEIAAFLIGAARFMTSDELLALVSAMASVGTQLRWDRPIVVDKHCIGGIPGNRTSMILVPIVAAHGLTIPKTSSRAITSPAGTADTMEVLARVDVSVAEMKEIVAACNGCLIWGGHVNLSPADDILISVERPLCLDTREQMVASIMSKKLAAGSTHLLVDLPVGPTAKVASALDAMRLRKLFEFVGDHFGIAVETITTDGRQPIGNGIGPVLEAQDVMAVLGNDPKAPADLREKSLRLAAHLLEYDPHLRGGAGYARARELLESGAALKQMQKIIDNQGPSTCHKDLGTLTAEVTAERDGVVSAIDCLQLNRLARTAGAPIDKGAGIRLFKKVGDRVEAGEPLYRIYAFDPAERELAVAAAKLACGYTVDDAQTFREQVM.

This sequence belongs to the thymidine/pyrimidine-nucleoside phosphorylase family. Type 2 subfamily.

The catalysed reaction is thymidine + phosphate = 2-deoxy-alpha-D-ribose 1-phosphate + thymine. The chain is Putative thymidine phosphorylase from Rhodopseudomonas palustris (strain BisB18).